A 302-amino-acid polypeptide reads, in one-letter code: Deoxyhypusine hydroxylase-B (302 aa).

HEAT-like PBS-type repeat units follow at residues 49 to 75 (LAHEAAFALGQMQDAEAIPALEAVLKD), 82 to 108 (VRHEAAEALGAIGLEKSISLLEESLAV), 171 to 200 (MYERYAALFALRNDSGDAAVSAIVAALGVK), 204 to 230 (LRHEVAYVLGQLQNKAASDALSTVLKN), and 237 to 263 (VRHEAAEALGSIADQESIALLEEFAKD). Histidine 51, glutamate 52, histidine 84, and glutamate 85 together coordinate Fe cation. Histidine 206, glutamate 207, histidine 239, and glutamate 240 together coordinate Fe cation.

The protein belongs to the deoxyhypusine hydroxylase family. Fe(2+) is required as a cofactor.

The enzyme catalyses [eIF5A protein]-deoxyhypusine + AH2 + O2 = [eIF5A protein]-hypusine + A + H2O. It functions in the pathway protein modification; eIF5A hypusination. Its function is as follows. Catalyzes the hydroxylation of the N(6)-(4-aminobutyl)-L-lysine intermediate to form hypusine, an essential post-translational modification only found in mature eIF-5A factor. This Oryza sativa subsp. japonica (Rice) protein is Deoxyhypusine hydroxylase-B.